Here is a 267-residue protein sequence, read N- to C-terminus: Acyl-[acyl-carrier-protein]--UDP-N-acetylglucosamine O-acyltransferase (267 aa).

It belongs to the transferase hexapeptide repeat family. LpxA subfamily. In terms of assembly, homotrimer.

The protein resides in the cytoplasm. It catalyses the reaction a (3R)-hydroxyacyl-[ACP] + UDP-N-acetyl-alpha-D-glucosamine = a UDP-3-O-[(3R)-3-hydroxyacyl]-N-acetyl-alpha-D-glucosamine + holo-[ACP]. The protein operates within glycolipid biosynthesis; lipid IV(A) biosynthesis; lipid IV(A) from (3R)-3-hydroxytetradecanoyl-[acyl-carrier-protein] and UDP-N-acetyl-alpha-D-glucosamine: step 1/6. Its function is as follows. Involved in the biosynthesis of lipid A, a phosphorylated glycolipid that anchors the lipopolysaccharide to the outer membrane of the cell. In Cupriavidus taiwanensis (strain DSM 17343 / BCRC 17206 / CCUG 44338 / CIP 107171 / LMG 19424 / R1) (Ralstonia taiwanensis (strain LMG 19424)), this protein is Acyl-[acyl-carrier-protein]--UDP-N-acetylglucosamine O-acyltransferase.